Reading from the N-terminus, the 486-residue chain is Cardiolipin synthase A (486 aa).

2 helical membrane passes run 3-23 and 38-58; these read TFYTVISWLMVFGYWLLIAGV and MAWLLVIYILPLFGIVAYLSF. 2 PLD phosphodiesterase domains span residues 219–246 and 399–426; these read MDLRQHRKVVLIDNYIAYTGSMNMVDPR and EDGLLHTKSVLVDGQLSLVGTVNLDMRS. Residues His-224, Lys-226, Asp-231, His-404, Lys-406, and Asp-411 contribute to the active site.

Belongs to the phospholipase D family. Cardiolipin synthase subfamily. ClsA sub-subfamily.

The protein resides in the cell inner membrane. The enzyme catalyses 2 a 1,2-diacyl-sn-glycero-3-phospho-(1'-sn-glycerol) = a cardiolipin + glycerol. Its function is as follows. Catalyzes the reversible phosphatidyl group transfer from one phosphatidylglycerol molecule to another to form cardiolipin (CL) (diphosphatidylglycerol) and glycerol. This is Cardiolipin synthase A from Serratia proteamaculans (strain 568).